Reading from the N-terminus, the 611-residue chain is Dihydroxy-acid dehydratase (611 aa).

Residue D81 participates in Mg(2+) binding. [2Fe-2S] cluster is bound at residue C122. The Mg(2+) site is built by D123 and K124. K124 carries the post-translational modification N6-carboxylysine. A [2Fe-2S] cluster-binding site is contributed by C195. E491 is a binding site for Mg(2+). The active-site Proton acceptor is the S517.

It belongs to the IlvD/Edd family. As to quaternary structure, homodimer. Requires [2Fe-2S] cluster as cofactor. It depends on Mg(2+) as a cofactor.

The enzyme catalyses (2R)-2,3-dihydroxy-3-methylbutanoate = 3-methyl-2-oxobutanoate + H2O. The catalysed reaction is (2R,3R)-2,3-dihydroxy-3-methylpentanoate = (S)-3-methyl-2-oxopentanoate + H2O. Its pathway is amino-acid biosynthesis; L-isoleucine biosynthesis; L-isoleucine from 2-oxobutanoate: step 3/4. It participates in amino-acid biosynthesis; L-valine biosynthesis; L-valine from pyruvate: step 3/4. Functionally, functions in the biosynthesis of branched-chain amino acids. Catalyzes the dehydration of (2R,3R)-2,3-dihydroxy-3-methylpentanoate (2,3-dihydroxy-3-methylvalerate) into 2-oxo-3-methylpentanoate (2-oxo-3-methylvalerate) and of (2R)-2,3-dihydroxy-3-methylbutanoate (2,3-dihydroxyisovalerate) into 2-oxo-3-methylbutanoate (2-oxoisovalerate), the penultimate precursor to L-isoleucine and L-valine, respectively. In Histophilus somni (strain 129Pt) (Haemophilus somnus), this protein is Dihydroxy-acid dehydratase.